Here is a 728-residue protein sequence, read N- to C-terminus: Catalase-peroxidase 1 (728 aa).

Residues 91-218 (WHGAGTYRIA…LAAVQMGLIY (128 aa)) constitute a cross-link (tryptophyl-tyrosyl-methioninium (Trp-Tyr) (with M-244)). Catalysis depends on His-92, which acts as the Proton acceptor. The segment at residues 218 to 244 (YVNPEGPDGKPDPVAAARDIRDTFARM) is a cross-link (tryptophyl-tyrosyl-methioninium (Tyr-Met) (with W-91)). His-259 lines the heme b pocket.

The protein belongs to the peroxidase family. Peroxidase/catalase subfamily. Homodimer or homotetramer. Heme b is required as a cofactor. Post-translationally, formation of the three residue Trp-Tyr-Met cross-link is important for the catalase, but not the peroxidase activity of the enzyme.

It catalyses the reaction H2O2 + AH2 = A + 2 H2O. The catalysed reaction is 2 H2O2 = O2 + 2 H2O. Bifunctional enzyme with both catalase and broad-spectrum peroxidase activity. This Burkholderia vietnamiensis (strain G4 / LMG 22486) (Burkholderia cepacia (strain R1808)) protein is Catalase-peroxidase 1.